Here is a 439-residue protein sequence, read N- to C-terminus: General transcription factor IIE subunit 1 (439 aa).

Alanine 2 is subject to N-acetylalanine. The HTH TFE/IIEalpha-type domain occupies 14–104; that stretch reads LKRLAKYVIR…NYRTLVNVVK (91 aa). Lysine 67 is modified (N6-acetyllysine). Residues cysteine 129, cysteine 132, cysteine 154, and cysteine 157 each coordinate Zn(2+). The C4-type zinc finger occupies 129 to 157; that stretch reads CPVCSSTFTDLEANQLFDPMTGTFRCTFC. Serine 268 is subject to Phosphoserine. Residues 333–344 show a composition bias toward low complexity; sequence SSAMAGSVGAAA. Positions 333–392 are disordered; the sequence is SSAMAGSVGAAAPVTTANGSDSESETSESDDDSPPRPAAVAVHKREEDEEEDDEFEEVAD. 2 stretches are compositionally biased toward acidic residues: residues 354 to 364 and 379 to 392; these read SESETSESDDD and EDEEEDDEFEEVAD.

It belongs to the TFIIE alpha subunit family. As to quaternary structure, tetramer of two alpha and two beta chains. Interacts with TAF6/TAFII80. Interacts with ATF7IP. Interacts with SND1. Part of TBP-based Pol II pre-initiation complex (PIC), in which Pol II core assembles with general transcription factors and other specific initiation factors including GTF2E1, GTF2E2, GTF2F1, GTF2F2, TCEA1, ERCC2, ERCC3, GTF2H2, GTF2H3, GTF2H4, GTF2H5, GTF2A1, GTF2A2, GTF2B and TBP; this large multi-subunit PIC complex mediates DNA unwinding and targets Pol II core to the transcription start site where the first phosphodiester bond forms.

Its subcellular location is the nucleus. Functionally, recruits TFIIH to the initiation complex and stimulates the RNA polymerase II C-terminal domain kinase and DNA-dependent ATPase activities of TFIIH. Both TFIIH and TFIIE are required for promoter clearance by RNA polymerase. The polypeptide is General transcription factor IIE subunit 1 (GTF2E1) (Pongo abelii (Sumatran orangutan)).